The chain runs to 124 residues: Ribonuclease pancreatic (124 aa).

Residues 1–23 form a disordered region; it reads RESPAMKFQRQHMDSGNSPGNNP. Lys-7 and Arg-10 together coordinate substrate. His-12 functions as the Proton acceptor in the catalytic mechanism. Positions 14–23 are enriched in polar residues; that stretch reads DSGNSPGNNP. 4 disulfides stabilise this stretch: Cys-26-Cys-84, Cys-40-Cys-95, Cys-58-Cys-110, and Cys-65-Cys-72. Residues 41–45 and Lys-66 contribute to the substrate site; that span reads KPVNT. Asn-76 carries an N-linked (GlcNAc...) asparagine; partial glycan. Arg-85 provides a ligand contact to substrate. His-119 serves as the catalytic Proton donor.

The protein belongs to the pancreatic ribonuclease family. Monomer. Interacts with and forms tight 1:1 complexes with RNH1. Dimerization of two such complexes may occur. Interaction with RNH1 inhibits this protein. In terms of tissue distribution, pancreas.

Its subcellular location is the secreted. It catalyses the reaction an [RNA] containing cytidine + H2O = an [RNA]-3'-cytidine-3'-phosphate + a 5'-hydroxy-ribonucleotide-3'-[RNA].. The catalysed reaction is an [RNA] containing uridine + H2O = an [RNA]-3'-uridine-3'-phosphate + a 5'-hydroxy-ribonucleotide-3'-[RNA].. Its function is as follows. Endonuclease that catalyzes the cleavage of RNA on the 3' side of pyrimidine nucleotides. Acts on single-stranded and double-stranded RNA. This Balaenoptera acutorostrata (Common minke whale) protein is Ribonuclease pancreatic (RNASE1).